The chain runs to 247 residues: 2,3-bisphosphoglycerate-dependent phosphoglycerate mutase (247 aa).

Residues 8 to 15, 21 to 22, R60, 87 to 90, K98, 114 to 115, and 183 to 184 each bind substrate; these read RHGESTWN, TG, ERHY, RR, and GN. H9 (tele-phosphohistidine intermediate) is an active-site residue. E87 serves as the catalytic Proton donor/acceptor.

This sequence belongs to the phosphoglycerate mutase family. BPG-dependent PGAM subfamily. Homodimer.

It catalyses the reaction (2R)-2-phosphoglycerate = (2R)-3-phosphoglycerate. It participates in carbohydrate degradation; glycolysis; pyruvate from D-glyceraldehyde 3-phosphate: step 3/5. Its function is as follows. Catalyzes the interconversion of 2-phosphoglycerate and 3-phosphoglycerate. The chain is 2,3-bisphosphoglycerate-dependent phosphoglycerate mutase from Methylibium petroleiphilum (strain ATCC BAA-1232 / LMG 22953 / PM1).